Reading from the N-terminus, the 744-residue chain is Tripartite motif-containing protein 2 (744 aa).

The residue at position 10 (Ser-10) is a Phosphoserine. The RING-type zinc-finger motif lies at 23 to 64; that stretch reads CSICLERYKNPKVLPCLHTFCERCLQNYIPAHSLTLSCPVCR. A B box-type zinc finger spans residues 113–154; sequence GKPLSCPNHDGNVMDFYCQSCETAMCRECTEGEHAEHPTVPL. Zn(2+)-binding residues include Cys-118, His-121, Cys-141, and His-146. Residues 320–421 form a Filamin repeat; sequence TTNAVASETV…IRGSPFKLKV (102 aa). Phosphothreonine is present on Thr-371. 3 positions are modified to phosphoserine: Ser-375, Ser-424, and Ser-428. The interval 432 to 462 is disordered; the sequence is EGVKRRVKSPGSGHVKQKAVKRPASMYSTGK. 6 NHL repeats span residues 473–516, 520–563, 564–605, 609–652, 656–699, and 700–743; these read IFRV…FSND, KSRF…FSSD, GKFK…FQPN, VTRF…FNQE, MLKF…FDGS, and GSFL…YRYL.

The protein belongs to the TRIM/RBCC family. Forms homooligomers. Interacts with TRIM3; this interaction reduces TRIM2 activity. Interacts with myosin V; myosin V may not be a substrate for ubiquitination. Interacts with NEFL. Interacts with phosphorylated BCL2L11. Interacts with SIRPA. RING-type zinc finger-dependent and UBE2D1-dependent autoubiquitination.

The protein resides in the cytoplasm. It carries out the reaction S-ubiquitinyl-[E2 ubiquitin-conjugating enzyme]-L-cysteine + [acceptor protein]-L-lysine = [E2 ubiquitin-conjugating enzyme]-L-cysteine + N(6)-ubiquitinyl-[acceptor protein]-L-lysine.. It participates in protein modification; protein ubiquitination. In terms of biological role, UBE2D1-dependent E3 ubiquitin-protein ligase that mediates the ubiquitination of NEFL and of phosphorylated BCL2L11. Plays a neuroprotective function. May play a role in neuronal rapid ischemic tolerance. Plays a role in antiviral immunity and limits New World arenavirus infection independently of its ubiquitin ligase activity. The chain is Tripartite motif-containing protein 2 (TRIM2) from Bos taurus (Bovine).